The following is a 332-amino-acid chain: MYTLGEIAKTINAKLVGDANIEITGIATSLSANQTQLTYINGNKYKQMLINSKAGVVILNNNLLKNCPTNALVVDNVYLAFAKATHLFKKQTVHCQGTHSSAKINYAKIAPNCIIGKNVVIGNHCTIAPNVVIEDDVIIGNYTLIQPNVSILQGCSIGNNVVISPGVVIGSEGFGNAQDQQKHWYSIAHLGYVIIGSNVSIGANTTIDRGTIEDTQIHNGVQIDNLVHIAHNVIIGQDSAIAATVTIGGSCTIGKRCMIGGGATIASHISLVDDIIVTGASTVDKNLSEQGHYTGFTSINKHQKWKKIQVWLLNLDKIAHYLNIKLKELKGK.

The Proton acceptor role is filled by His231.

This sequence belongs to the transferase hexapeptide repeat family. LpxD subfamily. Homotrimer.

It carries out the reaction a UDP-3-O-[(3R)-3-hydroxyacyl]-alpha-D-glucosamine + a (3R)-hydroxyacyl-[ACP] = a UDP-2-N,3-O-bis[(3R)-3-hydroxyacyl]-alpha-D-glucosamine + holo-[ACP] + H(+). It participates in bacterial outer membrane biogenesis; LPS lipid A biosynthesis. In terms of biological role, catalyzes the N-acylation of UDP-3-O-acylglucosamine using 3-hydroxyacyl-ACP as the acyl donor. Is involved in the biosynthesis of lipid A, a phosphorylated glycolipid that anchors the lipopolysaccharide to the outer membrane of the cell. This is UDP-3-O-acylglucosamine N-acyltransferase from Ruthia magnifica subsp. Calyptogena magnifica.